The chain runs to 44 residues: Photosystem I reaction center subunit IX (44 aa).

A helical membrane pass occupies residues Y7–I27.

This sequence belongs to the PsaJ family.

It localises to the plastid. The protein localises to the chloroplast thylakoid membrane. May help in the organization of the PsaE and PsaF subunits. The polypeptide is Photosystem I reaction center subunit IX (Phalaenopsis aphrodite subsp. formosana (Moth orchid)).